Here is a 266-residue protein sequence, read N- to C-terminus: Tryptophan synthase alpha chain (266 aa).

Active-site proton acceptor residues include E47 and D58.

This sequence belongs to the TrpA family. Tetramer of two alpha and two beta chains.

It is found in the plastid. The protein localises to the chloroplast. The enzyme catalyses (1S,2R)-1-C-(indol-3-yl)glycerol 3-phosphate + L-serine = D-glyceraldehyde 3-phosphate + L-tryptophan + H2O. It participates in amino-acid biosynthesis; L-tryptophan biosynthesis; L-tryptophan from chorismate: step 5/5. The alpha subunit is responsible for the aldol cleavage of indoleglycerol phosphate to indole and glyceraldehyde 3-phosphate. The protein is Tryptophan synthase alpha chain of Cyanidium caldarium (Red alga).